A 643-amino-acid polypeptide reads, in one-letter code: Alpha-dioxygenase PIOX (643 aa).

Histidine 167 (proton acceptor) is an active-site residue. Aspartate 168 lines the Ca(2+) pocket. Histidine 172 serves as a coordination point for heme b. 4 residues coordinate Ca(2+): threonine 220, tryptophan 222, aspartate 224, and serine 226. Heme b-binding residues include histidine 392, arginine 489, and arginine 493.

The protein belongs to the peroxidase family. The cofactor is heme b. Ca(2+) serves as cofactor.

The catalysed reaction is a 1,2-saturated fatty acid + O2 = a (2R)-2-hydroperoxy fatty acid. It carries out the reaction (9Z,12Z,15Z)-octadecatrienoate + O2 = (R)-2-hydroperoxy-(9Z,12Z,15Z)-octadecatrienoate. It catalyses the reaction (9Z,12Z)-octadecadienoate + O2 = (2R,9Z,12Z)-2-hydroperoxyoctadecadienoate. Alpha-dioxygenase that catalyzes the primary oxygenation step of a variety of 14-20 carbon fatty acids, containing up to three unsaturated bonds, into their corresponding 2R-hydroperoxides. Involved in the production of oxylipins that function in cell signaling, wound healing, and protection from infection. This chain is Alpha-dioxygenase PIOX, found in Nicotiana tabacum (Common tobacco).